A 402-amino-acid chain; its full sequence is 1-deoxy-D-xylulose 5-phosphate reductoisomerase (402 aa).

7 residues coordinate NADPH: threonine 25, glycine 26, serine 27, valine 28, arginine 52, asparagine 53, and asparagine 136. Lysine 137 is a binding site for 1-deoxy-D-xylulose 5-phosphate. Glutamate 138 provides a ligand contact to NADPH. Aspartate 162 lines the Mn(2+) pocket. The 1-deoxy-D-xylulose 5-phosphate site is built by serine 163, glutamate 164, serine 188, and histidine 211. Glutamate 164 provides a ligand contact to Mn(2+). Glycine 217 is a binding site for NADPH. The 1-deoxy-D-xylulose 5-phosphate site is built by serine 224, asparagine 229, lysine 230, and glutamate 233. Residue glutamate 233 coordinates Mn(2+).

It belongs to the DXR family. Mg(2+) serves as cofactor. Mn(2+) is required as a cofactor.

The enzyme catalyses 2-C-methyl-D-erythritol 4-phosphate + NADP(+) = 1-deoxy-D-xylulose 5-phosphate + NADPH + H(+). It functions in the pathway isoprenoid biosynthesis; isopentenyl diphosphate biosynthesis via DXP pathway; isopentenyl diphosphate from 1-deoxy-D-xylulose 5-phosphate: step 1/6. Its function is as follows. Catalyzes the NADPH-dependent rearrangement and reduction of 1-deoxy-D-xylulose-5-phosphate (DXP) to 2-C-methyl-D-erythritol 4-phosphate (MEP). This Rhodospirillum centenum (strain ATCC 51521 / SW) protein is 1-deoxy-D-xylulose 5-phosphate reductoisomerase.